The primary structure comprises 233 residues: Adenosylcobinamide-GDP ribazoletransferase (233 aa).

7 helical membrane passes run 24 to 44 (LWAL…VLYL), 46 to 66 (LPLS…LLHL), 96 to 116 (IAGV…LPLL), 117 to 137 (PFYA…LALA), 158 to 178 (QLTL…YIEP), 181 to 198 (ISSL…RLSL), and 209 to 229 (IGAV…VVWV).

It belongs to the CobS family. It depends on Mg(2+) as a cofactor.

The protein localises to the cell membrane. The enzyme catalyses alpha-ribazole + adenosylcob(III)inamide-GDP = adenosylcob(III)alamin + GMP + H(+). It carries out the reaction alpha-ribazole 5'-phosphate + adenosylcob(III)inamide-GDP = adenosylcob(III)alamin 5'-phosphate + GMP + H(+). The protein operates within cofactor biosynthesis; adenosylcobalamin biosynthesis; adenosylcobalamin from cob(II)yrinate a,c-diamide: step 7/7. In terms of biological role, joins adenosylcobinamide-GDP and alpha-ribazole to generate adenosylcobalamin (Ado-cobalamin). Also synthesizes adenosylcobalamin 5'-phosphate from adenosylcobinamide-GDP and alpha-ribazole 5'-phosphate. This Thermococcus gammatolerans (strain DSM 15229 / JCM 11827 / EJ3) protein is Adenosylcobinamide-GDP ribazoletransferase.